The sequence spans 89 residues: Mitochondrial import inner membrane translocase subunit Tim9 (89 aa).

A2 carries the N-acetylalanine modification. The Twin CX3C motif signature appears at 28 to 52; sequence CFLDCVKDFTTREVKPEEVTCSEHC. 2 disulfides stabilise this stretch: C28–C52 and C32–C48.

This sequence belongs to the small Tim family. Heterohexamer; composed of 3 copies of TIMM9 and 3 copies of TIMM10/TIM10A, named soluble 70 kDa complex. The complex forms a 6-bladed alpha-propeller structure and associates with the TIMM22 component of the TIM22 complex. Interacts with multi-pass transmembrane proteins in transit. Also forms a complex composed of TIMM9, TIMM10/TIM10A and FXC1/TIM10B.

The protein localises to the mitochondrion inner membrane. Mitochondrial intermembrane chaperone that participates in the import and insertion of multi-pass transmembrane proteins into the mitochondrial inner membrane. May also be required for the transfer of beta-barrel precursors from the TOM complex to the sorting and assembly machinery (SAM complex) of the outer membrane. Acts as a chaperone-like protein that protects the hydrophobic precursors from aggregation and guide them through the mitochondrial intermembrane space. In Rattus norvegicus (Rat), this protein is Mitochondrial import inner membrane translocase subunit Tim9 (Timm9).